We begin with the raw amino-acid sequence, 331 residues long: Proline-rich protein 33 (331 aa).

Disordered stretches follow at residues 1–112, 128–185, and 204–247; these read MGPQ…SVPR, SLES…PKVA, and APEP…APAS. Pro residues predominate over residues 94 to 105; that stretch reads PEEPPVPRPPPG. The segment covering 149–169 has biased composition (low complexity); that stretch reads PPMAGPAAEAERVSSPAWASS. The span at 170-185 shows a compositional bias: pro residues; sequence PTPPSGPHPCPVPKVA. Positions 217–238 are enriched in low complexity; that stretch reads EPEVPTPTEQEVPAPTEQEVPA.

The chain is Proline-rich protein 33 (PRR33) from Homo sapiens (Human).